A 323-amino-acid polypeptide reads, in one-letter code: MSQLPPAIFLMGPTAAGKTDLAIELTKVLPCELISVDSALVYRGMDIGTAKPSKELLAEFPHRLIDILDPAEAYSAADFRRDALEAMAEITARGKIPLLVGGTMLYYKALIEGLADMPAADPEVRAQIEEEAARLGWQALHDQLAAIDPESAARIHPNDPQRLSRALEVYRVSGQSMTELRLKQSVQSTEAAASGLQQLPYTVANLAIAPTNRQVLHERIKQRFTNMLEQGFIDEVVALRNRSDLHAGLPSIRAVGYRQVWDFLDGKLTSAEMQERGIIATRQLAKRQFTWLRSWKDLHWLDSLDCDNLPRALKYLGTISILS.

Residue 12–19 (GPTAAGKT) coordinates ATP. 14 to 19 (TAAGKT) contributes to the substrate binding site. Interaction with substrate tRNA stretches follow at residues 37–40 (DSAL) and 161–165 (QRLSR).

It belongs to the IPP transferase family. In terms of assembly, monomer. The cofactor is Mg(2+).

The catalysed reaction is adenosine(37) in tRNA + dimethylallyl diphosphate = N(6)-dimethylallyladenosine(37) in tRNA + diphosphate. Catalyzes the transfer of a dimethylallyl group onto the adenine at position 37 in tRNAs that read codons beginning with uridine, leading to the formation of N6-(dimethylallyl)adenosine (i(6)A). The chain is tRNA dimethylallyltransferase from Pseudomonas fluorescens (strain Pf0-1).